A 342-amino-acid chain; its full sequence is Cathepsin B-like cysteine proteinase 1 (342 aa).

Positions 1 to 18 (MKYLVLALCTYLCSQTGA) are cleaved as a signal peptide. Residues 19–86 (DENAAQGIPL…VKEDPDPEVD (68 aa)) constitute a propeptide, activation peptide. N-linked (GlcNAc...) asparagine glycosylation is present at asparagine 99. Cystine bridges form between cysteine 100/cysteine 128, cysteine 111/cysteine 156, cysteine 147/cysteine 214, cysteine 148/cysteine 152, cysteine 185/cysteine 218, and cysteine 193/cysteine 205. Cysteine 114 is an active-site residue. A glycan (N-linked (GlcNAc...) asparagine) is linked at asparagine 138. Asparagine 198 is a glycosylation site (N-linked (GlcNAc...) asparagine). Residue histidine 285 is part of the active site. N-linked (GlcNAc...) asparagine glycosylation is present at asparagine 296. The active site involves asparagine 305.

This sequence belongs to the peptidase C1 family.

In terms of biological role, expression of the protease correlates with blood-feeding and suggests a role for the protease in blood digestion. The sequence is that of Cathepsin B-like cysteine proteinase 1 (AC-1) from Haemonchus contortus (Barber pole worm).